A 61-amino-acid chain; its full sequence is Small ribosomal subunit protein uS14 (61 aa).

Zn(2+)-binding residues include Cys24, Cys27, Cys40, and Cys43.

It belongs to the universal ribosomal protein uS14 family. Zinc-binding uS14 subfamily. Part of the 30S ribosomal subunit. Contacts proteins S3 and S10. The cofactor is Zn(2+).

Its function is as follows. Binds 16S rRNA, required for the assembly of 30S particles and may also be responsible for determining the conformation of the 16S rRNA at the A site. This chain is Small ribosomal subunit protein uS14, found in Clostridium acetobutylicum (strain ATCC 824 / DSM 792 / JCM 1419 / IAM 19013 / LMG 5710 / NBRC 13948 / NRRL B-527 / VKM B-1787 / 2291 / W).